A 238-amino-acid chain; its full sequence is NADH-quinone oxidoreductase subunit C (238 aa).

The tract at residues 1-20 (MSSPDQNPSDAAGQTGSSNE) is disordered.

It belongs to the complex I 30 kDa subunit family. In terms of assembly, NDH-1 is composed of 14 different subunits. Subunits NuoB, C, D, E, F, and G constitute the peripheral sector of the complex.

The protein localises to the cell membrane. The catalysed reaction is a quinone + NADH + 5 H(+)(in) = a quinol + NAD(+) + 4 H(+)(out). In terms of biological role, NDH-1 shuttles electrons from NADH, via FMN and iron-sulfur (Fe-S) centers, to quinones in the respiratory chain. The immediate electron acceptor for the enzyme in this species is believed to be a menaquinone. Couples the redox reaction to proton translocation (for every two electrons transferred, four hydrogen ions are translocated across the cytoplasmic membrane), and thus conserves the redox energy in a proton gradient. The polypeptide is NADH-quinone oxidoreductase subunit C (Mycobacterium ulcerans (strain Agy99)).